We begin with the raw amino-acid sequence, 141 residues long: Nucleoside triphosphatase NudI (141 aa).

In terms of domain architecture, Nudix hydrolase spans 1–141 (MRQRTIVCPL…RKTLRLKGLL (141 aa)). The Nudix box signature appears at 38–59 (GGVEPGERIEEALRREIREELG).

The protein belongs to the Nudix hydrolase family. NudI subfamily. Monomer. Mg(2+) serves as cofactor.

The enzyme catalyses a ribonucleoside 5'-triphosphate + H2O = a ribonucleoside 5'-phosphate + diphosphate + H(+). It carries out the reaction a 2'-deoxyribonucleoside 5'-triphosphate + H2O = a 2'-deoxyribonucleoside 5'-phosphate + diphosphate + H(+). It catalyses the reaction dUTP + H2O = dUMP + diphosphate + H(+). The catalysed reaction is dTTP + H2O = dTMP + diphosphate + H(+). The enzyme catalyses dCTP + H2O = dCMP + diphosphate + H(+). Catalyzes the hydrolysis of nucleoside triphosphates, with a preference for pyrimidine deoxynucleoside triphosphates (dUTP, dTTP and dCTP). This Escherichia coli O6:K15:H31 (strain 536 / UPEC) protein is Nucleoside triphosphatase NudI.